A 660-amino-acid chain; its full sequence is Bifunctional polymyxin resistance protein ArnA (660 aa).

Residues 1–304 (MKAVIFAYHD…TLGLVAGACL (304 aa)) are formyltransferase ArnAFT. The active-site Proton donor; for formyltransferase activity is the His104. Residues Arg114 and 136–140 (VKRAD) each bind (6R)-10-formyltetrahydrofolate. Residues 314 to 660 (RRIRVLILGV…RSVDIAERAS (347 aa)) form a dehydrogenase ArnADH region. NAD(+)-binding positions include Asp347 and 368–369 (DI). Residues Ala393, Tyr398, and 432 to 433 (TS) each bind UDP-alpha-D-glucuronate. Residue Glu434 is the Proton acceptor; for decarboxylase activity of the active site. Residues Arg460, Asn492, 526 to 535 (KLIDGGQQKR), and Tyr613 each bind UDP-alpha-D-glucuronate. Arg619 functions as the Proton donor; for decarboxylase activity in the catalytic mechanism.

This sequence in the N-terminal section; belongs to the Fmt family. UDP-L-Ara4N formyltransferase subfamily. In the C-terminal section; belongs to the NAD(P)-dependent epimerase/dehydratase family. UDP-glucuronic acid decarboxylase subfamily. As to quaternary structure, homohexamer, formed by a dimer of trimers.

The catalysed reaction is UDP-alpha-D-glucuronate + NAD(+) = UDP-beta-L-threo-pentopyranos-4-ulose + CO2 + NADH. It carries out the reaction UDP-4-amino-4-deoxy-beta-L-arabinose + (6R)-10-formyltetrahydrofolate = UDP-4-deoxy-4-formamido-beta-L-arabinose + (6S)-5,6,7,8-tetrahydrofolate + H(+). It functions in the pathway nucleotide-sugar biosynthesis; UDP-4-deoxy-4-formamido-beta-L-arabinose biosynthesis; UDP-4-deoxy-4-formamido-beta-L-arabinose from UDP-alpha-D-glucuronate: step 1/3. The protein operates within nucleotide-sugar biosynthesis; UDP-4-deoxy-4-formamido-beta-L-arabinose biosynthesis; UDP-4-deoxy-4-formamido-beta-L-arabinose from UDP-alpha-D-glucuronate: step 3/3. Its pathway is bacterial outer membrane biogenesis; lipopolysaccharide biosynthesis. Bifunctional enzyme that catalyzes the oxidative decarboxylation of UDP-glucuronic acid (UDP-GlcUA) to UDP-4-keto-arabinose (UDP-Ara4O) and the addition of a formyl group to UDP-4-amino-4-deoxy-L-arabinose (UDP-L-Ara4N) to form UDP-L-4-formamido-arabinose (UDP-L-Ara4FN). The modified arabinose is attached to lipid A and is required for resistance to polymyxin and cationic antimicrobial peptides. The polypeptide is Bifunctional polymyxin resistance protein ArnA (Salmonella paratyphi A (strain ATCC 9150 / SARB42)).